Here is an 899-residue protein sequence, read N- to C-terminus: MDNCYDPGLDGIPEYDDFEFSPSIVEPKDPAPETADGPYLVIVEQPKQRGFRFRYGCEGPSHGGLPGASSEKGRKTYPTVKICNYEGPAKIEVDLVTHSDPPRAHAHSLVGKQCSELGVCAVSVGPKDMTAQFNNLGVLHVTKKNMMEIMIQKLQRQRLRSKPQGLTEAERRELEQEAKELKKVMDLSIVRLRFSAFLRASDGSFSLPLKPVISQPIHDSKSPGASNLKISRMDKTAGSVRGGDEVYLLCDKVQKDDIEVRFYEDDENGWQAFGDFSPTDVHKQYAIVFRTPPYHKMKIERPVTVFLQLKRKRGGDVSDSKQFTYYPLVEDKEEVQRKRRKALPTFSQPFGGGSHMGGGSGGSAGGYGGAGGGGSLGFFSSSLAYNPYQSGAAPMGCYPGGGGGAQMAGSRRDTDAGEGAEEPRTPPEAPQGEPQALDTLQRAREYNARLFGLAQRSARALLDYGVTADARALLAGQRHLLMAQDENGDTPLHLAIIHGQTGVIEQIAHVIYHAQYLGVINLTNHLHQTPLHLAVITGQTRVVSFLLQVGADPTLLDRHGDSALHLALRAGAAAPELLQALLRSGAHAVPQILHMPDFEGLYPVHLAVHARSPECLDLLVDCGAEVEAPERQGGRTALHLATEMEELGLVTHLVTKLHANVNARTFAGNTPLHLAAGLGSPTLTRLLLKAGADIHAENEEPLCPLPSPSTSGSDSDSEGPERDTQRNFRGHTPLDLTCSTKVKTLLLNAAQNTTEPPLAPPSPAGPGLSLGDAALQNLEQLLDGPEAQGSWAELAERLGLRSLVDTYRKTPSPSGSLLRSYKLAGGDLVGLLEALSDMGLHEGVRLLKGPETRDKLPSTEVKEDSAYGSQSVEQEAEKLCPPPEPPGGLCHGHPQPQVH.

S23 and S161 each carry phosphoserine. The region spanning 35 to 224 (ADGPYLVIVE…QPIHDSKSPG (190 aa)) is the RHD domain. The short motif at 337–341 (RKRRK) is the Nuclear localization signal element. A GRR region spans residues 346 to 377 (FSQPFGGGSHMGGGSGGSAGGYGGAGGGGSLG). The disordered stretch occupies residues 403–434 (GGAQMAGSRRDTDAGEGAEEPRTPPEAPQGEP). Over residues 410–425 (SRRDTDAGEGAEEPRT) the composition is skewed to basic and acidic residues. T425 is subject to Phosphothreonine. ANK repeat units lie at residues 487–516 (NGDTPLHLAIIHGQTGVIEQIAHVIYHAQY), 526–555 (LHQTPLHLAVITGQTRVVSFLLQVGADPTL), 559–590 (HGDSALHLALRAGAAAPELLQALLRSGAHAVP), 599–628 (EGLYPVHLAVHARSPECLDLLVDCGAEVEA), 633–663 (GGRTALHLATEMEELGLVTHLVTKLHANVNA), and 667–696 (AGNTPLHLAAGLGSPTLTRLLLKAGADIHA). The interval 698–734 (NEEPLCPLPSPSTSGSDSDSEGPERDTQRNFRGHTPL) is disordered. A phosphoserine mark is found at S713, S715, and S717. Residues 729–755 (RGHTPLDLTCSTKVKTLLLNAAQNTTE) form an ANK 7 repeat. Positions 764-851 (AGPGLSLGDA…EGVRLLKGPE (88 aa)) constitute a Death domain. S812 is modified (phosphoserine). Positions 851-865 (ETRDKLPSTEVKEDS) are enriched in basic and acidic residues. Residues 851–899 (ETRDKLPSTEVKEDSAYGSQSVEQEAEKLCPPPEPPGGLCHGHPQPQVH) are disordered. K855 participates in a covalent cross-link: Glycyl lysine isopeptide (Lys-Gly) (interchain with G-Cter in ubiquitin). A phosphoserine; by MAP3K14 mark is found at S865 and S869. The segment covering 887–899 (GGLCHGHPQPQVH) has biased composition (low complexity).

As to quaternary structure, component of the NF-kappa-B RelB-p52 complex. Homodimer; component of the NF-kappa-B p52-p52 complex. Component of the NF-kappa-B p65-p52 complex. Component of the NF-kappa-B p52-c-Rel complex. NFKB2/p52 interacts with NFKBIE. Component of a complex consisting of the NF-kappa-B p50-p50 homodimer and BCL3. Directly interacts with MEN1. While translation occurs, the particular unfolded structure after the GRR repeat promotes the generation of p52 making it an acceptable substrate for the proteasome. This process is known as cotranslational processing. The processed form is active and the unprocessed form acts as an inhibitor (I kappa B-like), being able to form cytosolic complexes with NF-kappa B, trapping it in the cytoplasm. Complete folding of the region downstream of the GRR repeat precludes processing. Post-translationally, subsequent to MAP3K14-dependent serine phosphorylation, p100 polyubiquitination occurs then triggering its proteasome-dependent processing. In terms of processing, constitutive processing is tightly suppressed by its C-terminal processing inhibitory domain, named PID, which contains the death domain. Ubiquitinated by TRIM55; leading to processing by VCP and subsequent ubiquitin-dependent protein degradation by the proteasome. Highly expressed in lymph nodes and thymus.

The protein resides in the nucleus. It is found in the cytoplasm. Functionally, NF-kappa-B is a pleiotropic transcription factor present in almost all cell types and is the endpoint of a series of signal transduction events that are initiated by a vast array of stimuli related to many biological processes such as inflammation, immunity, differentiation, cell growth, tumorigenesis and apoptosis. NF-kappa-B is a homo- or heterodimeric complex formed by the Rel-like domain-containing proteins RELA/p65, RELB, NFKB1/p105, NFKB1/p50, REL and NFKB2/p52. The dimers bind at kappa-B sites in the DNA of their target genes and the individual dimers have distinct preferences for different kappa-B sites that they can bind with distinguishable affinity and specificity. Different dimer combinations act as transcriptional activators or repressors, respectively. NF-kappa-B is controlled by various mechanisms of post-translational modification and subcellular compartmentalization as well as by interactions with other cofactors or corepressors. NF-kappa-B complexes are held in the cytoplasm in an inactive state complexed with members of the NF-kappa-B inhibitor (I-kappa-B) family. In a conventional activation pathway, I-kappa-B is phosphorylated by I-kappa-B kinases (IKKs) in response to different activators, subsequently degraded thus liberating the active NF-kappa-B complex which translocates to the nucleus. In a non-canonical activation pathway, the MAP3K14-activated CHUK/IKKA homodimer phosphorylates NFKB2/p100 associated with RelB, inducing its proteolytic processing to NFKB2/p52 and the formation of NF-kappa-B RelB-p52 complexes. The NF-kappa-B heterodimeric RelB-p52 complex is a transcriptional activator. The NF-kappa-B p52-p52 homodimer is a transcriptional repressor. NFKB2 appears to have dual functions such as cytoplasmic retention of attached NF-kappa-B proteins by p100 and generation of p52 by a cotranslational processing. The proteasome-mediated process ensures the production of both p52 and p100 and preserves their independent function. p52 binds to the kappa-B consensus sequence 5'-GGRNNYYCC-3', located in the enhancer region of genes involved in immune response and acute phase reactions. p52 and p100 are respectively the minor and major form; the processing of p100 being relatively poor. Isoform p49 is a subunit of the NF-kappa-B protein complex, which stimulates the HIV enhancer in synergy with p65. In concert with RELB, regulates the circadian clock by repressing the transcriptional activator activity of the CLOCK-BMAL1 heterodimer. This is Nuclear factor NF-kappa-B p100 subunit (Nfkb2) from Mus musculus (Mouse).